Consider the following 265-residue polypeptide: MSSASYLQRAEAHPSPVASKLLKLMHEKKTNLCASLDVTTTSELLKLVDTLGPYICLLKTHVDILSDFSFENTVKPLKEMAAKHNFLIFEDRKFADIGNTVKLQYTSGVYKIAEWADITNAHGVTGQGIVTGLKQGAEETTNEPRGLLMLAELSSKGSLAHGEYTKGTVDIAKSDKDFVIGFIAQKDMGGRDEGFDWLIMTPGVGLDDKGDALGQQYRTVDEVFSTGTDIIIVGRGLFAKGRDPKTEGERYRKAGWDAYLKRIGN.

Substrate is bound by residues aspartate 37, 59–61 (KTH), 91–100 (DRKFADIGNT), tyrosine 217, and arginine 235. Catalysis depends on lysine 93, which acts as the Proton donor.

The protein belongs to the OMP decarboxylase family.

The catalysed reaction is orotidine 5'-phosphate + H(+) = UMP + CO2. It participates in pyrimidine metabolism; UMP biosynthesis via de novo pathway; UMP from orotate: step 2/2. The protein is Orotidine 5'-phosphate decarboxylase (URA3) of Candida glabrata (strain ATCC 2001 / BCRC 20586 / JCM 3761 / NBRC 0622 / NRRL Y-65 / CBS 138) (Yeast).